A 283-amino-acid polypeptide reads, in one-letter code: uncharacterized protein (283 aa).

The next 6 helical transmembrane spans lie at 28 to 48 (LSST…ILLI), 65 to 85 (LTSL…GFIL), 113 to 133 (LKRG…FMIV), 135 to 155 (ILFI…IVFI), 200 to 220 (LNYI…NFVV), and 246 to 266 (IVDV…AVFA).

It to M.jannaschii MJ0233.

Its subcellular location is the cell membrane. This is an uncharacterized protein from Methanocaldococcus jannaschii (strain ATCC 43067 / DSM 2661 / JAL-1 / JCM 10045 / NBRC 100440) (Methanococcus jannaschii).